A 122-amino-acid polypeptide reads, in one-letter code: Small ribosomal subunit protein uS13 (122 aa).

Residues 97-122 (PVRGQKTKSNARTRKGPRPSRIKKKK) are disordered. A compositionally biased stretch (basic residues) spans 101 to 122 (QKTKSNARTRKGPRPSRIKKKK).

The protein belongs to the universal ribosomal protein uS13 family. Part of the 30S ribosomal subunit. Forms a loose heterodimer with protein S19. Forms two bridges to the 50S subunit in the 70S ribosome.

Located at the top of the head of the 30S subunit, it contacts several helices of the 16S rRNA. In the 70S ribosome it contacts the 23S rRNA (bridge B1a) and protein L5 of the 50S subunit (bridge B1b), connecting the 2 subunits; these bridges are implicated in subunit movement. Contacts the tRNAs in the A and P-sites. The chain is Small ribosomal subunit protein uS13 from Thermosipho melanesiensis (strain DSM 12029 / CIP 104789 / BI429).